A 396-amino-acid polypeptide reads, in one-letter code: Enoyl-[acyl-carrier-protein] reductase [NADH] (396 aa).

Residues 47-52 (GASTGF), 73-74 (FE), 110-111 (DA), and 138-139 (LA) each bind NAD(+). Tyr-224 is a substrate binding site. Catalysis depends on Tyr-234, which acts as the Proton donor. NAD(+) contacts are provided by residues Lys-243 and 272 to 274 (LVT).

The protein belongs to the TER reductase family. Monomer.

The enzyme catalyses a 2,3-saturated acyl-[ACP] + NAD(+) = a (2E)-enoyl-[ACP] + NADH + H(+). It participates in lipid metabolism; fatty acid biosynthesis. Functionally, involved in the final reduction of the elongation cycle of fatty acid synthesis (FAS II). Catalyzes the reduction of a carbon-carbon double bond in an enoyl moiety that is covalently linked to an acyl carrier protein (ACP). The protein is Enoyl-[acyl-carrier-protein] reductase [NADH] of Flavobacterium johnsoniae (strain ATCC 17061 / DSM 2064 / JCM 8514 / BCRC 14874 / CCUG 350202 / NBRC 14942 / NCIMB 11054 / UW101) (Cytophaga johnsonae).